The following is a 380-amino-acid chain: MLQTLYDYFWWERLWLPVNLTWADLEDRDGRVYAKASDLYITLPLALLFLIVRYFFELYVATPLAALLNIKEKTRLRAPPNATLEHFYLTSGKQPKQVEVELLSRQSGLSGRQVERWFRRRRNQDRPSLLKKFREASWRFTFYLIAFIAGMAVIVDKPWFYDMKKVWEGYPIQSTIPSQYWYYMIELSFYWSLLFSIASDVKRKDFKEQIIHHVATIILISFSWFANYIRAGTLIMALHDSSDYLLESAKMFNYAGWKNTCNNIFIVFAIVFIITRLVILPFWILHCTLVYPLELYPAFFGYYFFNSMMGVLQLLHIFWAYLILRMAHKFITGKLVEDERSDREETESSEGEEAAAGGGAKSRPLANGHPILNNNHRKND.

Topologically, residues 1 to 40 (MLQTLYDYFWWERLWLPVNLTWADLEDRDGRVYAKASDLY) are lumenal. A glycan (N-linked (GlcNAc...) asparagine) is linked at Asn-19. Residues 41–61 (ITLPLALLFLIVRYFFELYVA) form a helical membrane-spanning segment. The interval 67-128 (LLNIKEKTRL…RRRRNQDRPS (62 aa)) is homeobox-like. Residues 131-332 (KKFREASWRF…ILRMAHKFIT (202 aa)) enclose the TLC domain. 4 helical membrane-spanning segments follow: residues 140–160 (FTFY…KPWF), 181–201 (WYYM…ASDV), 209–229 (QIIH…ANYI), and 264–284 (IFIV…PFWI). The short motif at 291–300 (YPLELYPAFF) is the Last loop motif element. Residues 304–324 (FFNSMMGVLQLLHIFWAYLIL) traverse the membrane as a helical segment. Residues 325–380 (RMAHKFITGKLVEDERSDREETESSEGEEAAAGGGAKSRPLANGHPILNNNHRKND) are Cytoplasmic-facing. Positions 338–380 (DERSDREETESSEGEEAAAGGGAKSRPLANGHPILNNNHRKND) are disordered. Position 341 is a phosphoserine (Ser-341). Over residues 344–353 (EETESSEGEE) the composition is skewed to acidic residues. Residue Thr-346 is modified to Phosphothreonine. Residues Ser-348 and Ser-349 each carry the phosphoserine modification.

As to quaternary structure, interacts with ATP6V0C, ASGR1, ASGR2 and SLC22A1/OCT1. Interacts with ELOV1, HSD17B12 and TECR. Interacts with NDUFS2. Interacts with PAQR4; the interaction regulates the stability and activity of CERS2 and is inhibited in presence of ceramides. In terms of processing, acetylated. Deacetylation by SIRT3 increases enzyme activity and promotes mitochondrial ceramide accumulation. Post-translationally, phosphorylated at the C-terminus by CK2, leading to increase the ceramide synthase activity. In terms of tissue distribution, expressed in kidney, liver, brain, heart, placenta and lung.

It localises to the endoplasmic reticulum membrane. The catalysed reaction is a very long-chain fatty acyl-CoA + a sphingoid base = an N-(very-long-chain fatty acyl)-sphingoid base + CoA + H(+). It catalyses the reaction docosanoyl-CoA + sphinganine = N-docosanoylsphinganine + CoA + H(+). It carries out the reaction tetracosanoyl-CoA + sphinganine = N-tetracosanoylsphinganine + CoA + H(+). The enzyme catalyses hexacosanoyl-CoA + sphinganine = N-hexacosanoylsphinganine + CoA + H(+). The catalysed reaction is (15Z)-tetracosenoyl-CoA + sphinganine = N-(15Z-tetracosenoyl)-sphinganine + CoA + H(+). It catalyses the reaction 2-hydroxytetracosanoyl-CoA + sphinganine = N-(2-hydroxytetracosanoyl)-sphinganine + CoA + H(+). It carries out the reaction 2-hydroxydocosanoyl-CoA + sphinganine = N-(2-hydroxydocosanoyl)-sphinganine + CoA + H(+). The enzyme catalyses 2-hydroxytetracosenoyl-CoA + sphinganine = N-(2-hydroxytetracosenoyl)-sphinganine + CoA + H(+). The catalysed reaction is tetracosenoyl-CoA + sphinganine = an N-tetracosenoylsphinganine + CoA + H(+). It catalyses the reaction hexacosenoyl-CoA + sphinganine = N-hexacosenoylsphinganine + CoA + H(+). It carries out the reaction tetracosanoyl-CoA + sphing-4-enine = N-tetracosanoyl-sphing-4-enine + CoA + H(+). The enzyme catalyses tetracosenoyl-CoA + sphing-4-enine = N-(tetracosenoyl)-sphing-4-enine + CoA + H(+). The catalysed reaction is heptadecasphing-4-enine + tetracosanoyl-CoA = N-tetracosanoyl-heptadecasphing-4-enine + CoA + H(+). It catalyses the reaction a fatty acyl-CoA + sphing-4-enine = an N-acylsphing-4-enine + CoA + H(+). It carries out the reaction sphing-4-enine + hexadecanoyl-CoA = N-hexadecanoylsphing-4-enine + CoA + H(+). The enzyme catalyses sphing-4-enine + octadecanoyl-CoA = N-octadecanoylsphing-4-enine + CoA + H(+). The catalysed reaction is eicosanoyl-CoA + sphing-4-enine = N-eicosanoyl-sphing-4-enine + CoA + H(+). It catalyses the reaction sphinganine + hexadecanoyl-CoA = N-hexadecanoylsphinganine + CoA + H(+). It carries out the reaction sphinganine + octadecanoyl-CoA = N-(octadecanoyl)-sphinganine + CoA + H(+). The enzyme catalyses sphinganine + (9Z)-octadecenoyl-CoA = N-(9Z-octadecenoyl)-sphinganine + CoA + H(+). The catalysed reaction is eicosanoyl-CoA + sphinganine = N-eicosanoylsphinganine + CoA + H(+). Its pathway is lipid metabolism; sphingolipid metabolism. Ceramide synthase activity is inhibited by sphingosine-1-phosphate. In terms of biological role, ceramide synthase that catalyzes the transfer of the acyl chain from acyl-CoA to a sphingoid base, with high selectivity toward very-long-chain fatty acyl-CoA (chain length C22-C27). N-acylates sphinganine and sphingosine bases to form dihydroceramides and ceramides in de novo synthesis and salvage pathways, respectively. Plays a non-redundant role in the synthesis of ceramides with very-long-chain fatty acids in kidney, liver and brain. Regulates the abundance of myelin-specific sphingolipids galactosylceramide and sulfatide that affects myelin sheath architecture and motor neuron functions. This is Ceramide synthase 2 from Homo sapiens (Human).